The chain runs to 151 residues: Transcriptional regulator MraZ (151 aa).

2 SpoVT-AbrB domains span residues 5-52 (ANAI…PLDE) and 81-124 (AVDL…DEDA).

It belongs to the MraZ family. In terms of assembly, forms oligomers.

It localises to the cytoplasm. The protein localises to the nucleoid. The polypeptide is Transcriptional regulator MraZ (Pseudomonas fluorescens (strain SBW25)).